A 415-amino-acid chain; its full sequence is Alditol oxidase (415 aa).

An FAD-binding PCMH-type domain is found at 12–179 (ITYTAKEVHR…TALTLDLEPA (168 aa)). Residue His46 is modified to Pros-8alpha-FAD histidine. FAD contacts are provided by residues Ser106, Ser111, Gly114, 118–121 (TGTH), and Val169. Ser106 contributes to the xylitol binding site. Xylitol is bound by residues Glu317, Arg319, and Thr342. Arg319 is a binding site for FAD. His369 contacts FAD. Residue Lys372 participates in xylitol binding.

It belongs to the oxygen-dependent FAD-linked oxidoreductase family. In terms of assembly, monomer. The cofactor is FAD.

The enzyme catalyses an alditol + O2 = an aldose + H2O2. The catalysed reaction is xylitol + O2 = D-xylose + H2O2. It carries out the reaction D-sorbitol + O2 = D-glucose + H2O2. Functionally, oxidase that performs selective oxidation of the terminal primary hydroxyl group of several alditols, with a reduction of O2 to H2O2. Shows highest activity on xylitol and D-sorbitol, and to a lesser extent, can also use galactitol, D-mannitol, and D-arabitol as substrates in vitro. Is not active on D-glucose, D-xylose, D-galactose, D-mannose, D-fructose, L-sorbose, L-fucose, myoinositol, glycerol, ethyl alcohol, and meso-erythritol. This chain is Alditol oxidase, found in Streptomyces sp. (strain IKD472 / FERM P-14339).